Here is a 433-residue protein sequence, read N- to C-terminus: 5-methylthioadenosine/S-adenosylhomocysteine deaminase (433 aa).

H62 and H64 together coordinate Zn(2+). Substrate-binding residues include E91, R143, and H183. Zn(2+) is bound at residue H210. Positions 213 and 298 each coordinate substrate. Zn(2+) is bound at residue D298.

Belongs to the metallo-dependent hydrolases superfamily. MTA/SAH deaminase family. Requires Zn(2+) as cofactor.

It catalyses the reaction S-adenosyl-L-homocysteine + H2O + H(+) = S-inosyl-L-homocysteine + NH4(+). The catalysed reaction is S-methyl-5'-thioadenosine + H2O + H(+) = S-methyl-5'-thioinosine + NH4(+). Its function is as follows. Catalyzes the deamination of 5-methylthioadenosine and S-adenosyl-L-homocysteine into 5-methylthioinosine and S-inosyl-L-homocysteine, respectively. Is also able to deaminate adenosine. The polypeptide is 5-methylthioadenosine/S-adenosylhomocysteine deaminase (Caldanaerobacter subterraneus subsp. tengcongensis (strain DSM 15242 / JCM 11007 / NBRC 100824 / MB4) (Thermoanaerobacter tengcongensis)).